Here is a 446-residue protein sequence, read N- to C-terminus: Glutamyl-tRNA(Gln) amidotransferase subunit D (446 aa).

Residues 90–421 (SEVMIISTGG…DRIKEIMLTN (332 aa)) form the Asparaginase/glutaminase domain. Active-site residues include Thr-100, Thr-176, Asp-177, and Lys-255.

It belongs to the asparaginase 1 family. GatD subfamily. In terms of assembly, heterodimer of GatD and GatE.

The catalysed reaction is L-glutamyl-tRNA(Gln) + L-glutamine + ATP + H2O = L-glutaminyl-tRNA(Gln) + L-glutamate + ADP + phosphate + H(+). Its function is as follows. Allows the formation of correctly charged Gln-tRNA(Gln) through the transamidation of misacylated Glu-tRNA(Gln) in organisms which lack glutaminyl-tRNA synthetase. The reaction takes place in the presence of glutamine and ATP through an activated gamma-phospho-Glu-tRNA(Gln). The GatDE system is specific for glutamate and does not act on aspartate. The sequence is that of Glutamyl-tRNA(Gln) amidotransferase subunit D from Sulfolobus acidocaldarius (strain ATCC 33909 / DSM 639 / JCM 8929 / NBRC 15157 / NCIMB 11770).